The sequence spans 358 residues: C-X-C chemokine receptor type 4-B (358 aa).

Residues 1-25 (MDGFSGGIDINIFDGNSTENGSGDF) form an important for chemokine binding and signaling region. Topologically, residues 1 to 44 (MDGFSGGIDINIFDGNSTENGSGDFEDFIEPCFMQENSDFNRIF) are extracellular. Asn16 and Asn20 each carry an N-linked (GlcNAc...) asparagine glycan. 2 disulfide bridges follow: Cys32–Cys281 and Cys113–Cys190. A helical transmembrane segment spans residues 45 to 67 (LPTIYSFIFLLGIIGNGLVVVVM). Topologically, residues 68-81 (GYQKKSRTMTDKYR) are cytoplasmic. A helical transmembrane segment spans residues 82–103 (LHLSVADLLFVFTLPFWSVDAA). Residues 98–101 (WSVD) are chemokine binding. Residues 104–114 (IGWYFKEFLCK) are Extracellular-facing. The helical transmembrane segment at 115 to 134 (AVHVIYTVNLYSSVLILAFI) threads the bilayer. Residues 117–121 (HVIYT) are chemokine binding. The Cytoplasmic segment spans residues 135 to 158 (SLDRYLAIVHATNSQGSRKMLADK). Residues 139 to 151 (YLAIVHATNSQGS) form an involved in dimerization; when bound to chemokine region. The helical transmembrane segment at 159-178 (VVYAGVWLPALLLTVPDLVF) threads the bilayer. The Extracellular segment spans residues 179–202 (ASVSNENGQFVCDRIYPIDNRETW). The tract at residues 190 to 194 (CDRIY) is chemokine binding, important for signaling. The helical transmembrane segment at 203–223 (TVGFRFLHITVGLILPGLIIL) threads the bilayer. The Cytoplasmic segment spans residues 224-248 (VCYCVIISKLSHSKGHQKRKALKTT). The chain crosses the membrane as a helical span at residues 249–268 (VILILAFFACWLPYYVCLTT). Residues 269–289 (DTFMMLGLVKADCIWENTLHK) are Extracellular-facing. The chain crosses the membrane as a helical span at residues 290 to 309 (AISITEALAFFHCCLNPILY). Topologically, residues 310–358 (AFLGAKFKKSAQNAFTSVSRGSSLKILSKKRAGLSSVSTESESSSFHSS) are cytoplasmic. The disordered stretch occupies residues 338 to 358 (KKRAGLSSVSTESESSSFHSS). Low complexity predominate over residues 344–358 (SSVSTESESSSFHSS).

The protein belongs to the G-protein coupled receptor 1 family. As to quaternary structure, monomer. Can form dimers. Post-translationally, sulfation is required for efficient binding of cxcl12/sdf-1alpha and promotes its dimerization. O- and N-glycosylated.

The protein resides in the cell membrane. It localises to the cytoplasm. It is found in the nucleus. The protein localises to the early endosome. Its subcellular location is the late endosome. The protein resides in the lysosome. Functionally, receptor for the C-X-C chemokine cxcl12/sdf-1. Transduces a signal by increasing the intracellular level of calcium ions. Signaling with cxcl12/sdf-1 mediates the directional movement of mesodermal cells during gastrulation. May play a role in the migration of embryonic presumptive primordial germ cells (pPGCs). May also be involved in regulating migration of hematopoietic stem cells into the larval liver. The chain is C-X-C chemokine receptor type 4-B (cxcr4-b) from Xenopus laevis (African clawed frog).